Consider the following 333-residue polypeptide: Flagellar P-ring protein (333 aa).

The signal sequence occupies residues 1 to 22 (MRRNILSMFLFITLIIYSSIFA).

It belongs to the FlgI family. In terms of assembly, the basal body constitutes a major portion of the flagellar organelle and consists of four rings (L,P,S, and M) mounted on a central rod.

It is found in the periplasm. The protein resides in the bacterial flagellum basal body. Assembles around the rod to form the L-ring and probably protects the motor/basal body from shearing forces during rotation. The polypeptide is Flagellar P-ring protein (Fervidobacterium nodosum (strain ATCC 35602 / DSM 5306 / Rt17-B1)).